The following is a 517-amino-acid chain: Putative ribose/galactose/methyl galactoside import ATP-binding protein 1 (517 aa).

ABC transporter domains follow at residues 23–258 (LQLQ…VGRP) and 269–515 (TPTD…SGRS). 55–62 (GENGAGKS) provides a ligand contact to ATP.

Belongs to the ABC transporter superfamily. Carbohydrate importer 2 (CUT2) (TC 3.A.1.2) family.

It localises to the cell inner membrane. The catalysed reaction is D-ribose(out) + ATP + H2O = D-ribose(in) + ADP + phosphate + H(+). The enzyme catalyses D-galactose(out) + ATP + H2O = D-galactose(in) + ADP + phosphate + H(+). Part of an ABC transporter complex involved in carbohydrate import. Could be involved in ribose, galactose and/or methyl galactoside import. Responsible for energy coupling to the transport system. The sequence is that of Putative ribose/galactose/methyl galactoside import ATP-binding protein 1 from Burkholderia ambifaria (strain ATCC BAA-244 / DSM 16087 / CCUG 44356 / LMG 19182 / AMMD) (Burkholderia cepacia (strain AMMD)).